The chain runs to 347 residues: Probable zinc transporter 8 (347 aa).

The first 27 residues, 1–27 (MATTTQHMNQIFLVLLLISFAISPAIS), serve as a signal peptide directing secretion. At 28–51 (TVPKECETDSTDSCIDKTKALPLK) the chain is on the extracellular side. The chain crosses the membrane as a helical span at residues 52-72 (IVAIVAILVTSMIGVAAPLFS). The Cytoplasmic portion of the chain corresponds to 73–83 (RYVTFLHPDGK). Residues 84–104 (IFMIIKCFASGIILGTGFMHV) form a helical membrane-spanning segment. Residues 105-124 (LPDSFEMLSSPCLEDNPWHK) are Extracellular-facing. A helical transmembrane segment spans residues 125-145 (FPFTGFVAMLSGLVTLAIDSI). Over 146–192 (ATSLYTKKAVADDSEERTTPMIIQIDHLPLTTKERSSTCSKQLLRYR) the chain is Cytoplasmic. A helical membrane pass occupies residues 193-213 (VIATVLELGIIVHSVVIGLSL). Topologically, residues 214–224 (GATNDTCTIKG) are extracellular. The chain crosses the membrane as a helical span at residues 225 to 245 (LIAALCFHQMFEGMGLGGCIL). The Cytoplasmic portion of the chain corresponds to 246–254 (QAEYTNVKK). The chain crosses the membrane as a helical span at residues 255–275 (FVMAFFFAVTTPSGIALGIAL). Residues 276-286 (SSVYKDNSPTA) are Extracellular-facing. Residues 287-307 (LITVGLLNACSAGLLIYMALV) traverse the membrane as a helical segment. Residues 308–326 (DLLAAEFMGSMLQRSVKLQ) lie on the Cytoplasmic side of the membrane. Residues 327–347 (LNCFGAALLGCGGMSVLAKWA) form a helical membrane-spanning segment.

This sequence belongs to the ZIP transporter (TC 2.A.5) family.

It localises to the cell membrane. Probably mediates zinc uptake from the rhizosphere. The sequence is that of Probable zinc transporter 8 (ZIP8) from Arabidopsis thaliana (Mouse-ear cress).